Reading from the N-terminus, the 383-residue chain is Lipoyl synthase, mitochondrial (383 aa).

The segment covering 25 to 34 (STPSLLQTLD) has biased composition (polar residues). Positions 25–44 (STPSLLQTLDPSVPSPPAAG) are disordered. Residues C110, C115, C121, C141, C145, C148, and S357 each contribute to the [4Fe-4S] cluster site. A Radical SAM core domain is found at 126-346 (ETGTATATIM…RALGVEMGFR (221 aa)).

It belongs to the radical SAM superfamily. Lipoyl synthase family. Requires [4Fe-4S] cluster as cofactor.

The protein resides in the mitochondrion. The catalysed reaction is [[Fe-S] cluster scaffold protein carrying a second [4Fe-4S](2+) cluster] + N(6)-octanoyl-L-lysyl-[protein] + 2 oxidized [2Fe-2S]-[ferredoxin] + 2 S-adenosyl-L-methionine + 4 H(+) = [[Fe-S] cluster scaffold protein] + N(6)-[(R)-dihydrolipoyl]-L-lysyl-[protein] + 4 Fe(3+) + 2 hydrogen sulfide + 2 5'-deoxyadenosine + 2 L-methionine + 2 reduced [2Fe-2S]-[ferredoxin]. The protein operates within protein modification; protein lipoylation via endogenous pathway; protein N(6)-(lipoyl)lysine from octanoyl-[acyl-carrier-protein]: step 2/2. Functionally, catalyzes the radical-mediated insertion of two sulfur atoms into the C-6 and C-8 positions of the octanoyl moiety bound to the lipoyl domains of lipoate-dependent enzymes, thereby converting the octanoylated domains into lipoylated derivatives. This is Lipoyl synthase, mitochondrial from Zea mays (Maize).